The following is a 726-amino-acid chain: Catalase-peroxidase (726 aa).

The interval 1–33 is disordered; sequence MSTTDDTHNTLSTGKCPFHQGGHDRSAGAGTAS. Residues 105–226 constitute a cross-link (tryptophyl-tyrosyl-methioninium (Trp-Tyr) (with M-252)); it reads WHGAGTYRSI…LGATEMGLIY (122 aa). Catalysis depends on H106, which acts as the Proton acceptor. A cross-link (tryptophyl-tyrosyl-methioninium (Tyr-Met) (with W-105)) is located at residues 226 to 252; sequence YVNPEGPDHSGEPLSAAAAIRATFGNM. H267 lines the heme b pocket.

This sequence belongs to the peroxidase family. Peroxidase/catalase subfamily. In terms of assembly, homodimer or homotetramer. Heme b serves as cofactor. In terms of processing, formation of the three residue Trp-Tyr-Met cross-link is important for the catalase, but not the peroxidase activity of the enzyme.

It catalyses the reaction H2O2 + AH2 = A + 2 H2O. It carries out the reaction 2 H2O2 = O2 + 2 H2O. Bifunctional enzyme with both catalase and broad-spectrum peroxidase activity. In Salmonella paratyphi A (strain ATCC 9150 / SARB42), this protein is Catalase-peroxidase.